A 101-amino-acid polypeptide reads, in one-letter code: NAD(P)H-quinone oxidoreductase subunit 4L, chloroplastic (101 aa).

3 helical membrane-spanning segments follow: residues 2-22 (ILEH…YGLI), 32-52 (MCLE…SDFF), and 61-81 (IFCI…LAIV).

This sequence belongs to the complex I subunit 4L family. As to quaternary structure, NDH is composed of at least 16 different subunits, 5 of which are encoded in the nucleus.

The protein resides in the plastid. It is found in the chloroplast thylakoid membrane. The catalysed reaction is a plastoquinone + NADH + (n+1) H(+)(in) = a plastoquinol + NAD(+) + n H(+)(out). The enzyme catalyses a plastoquinone + NADPH + (n+1) H(+)(in) = a plastoquinol + NADP(+) + n H(+)(out). NDH shuttles electrons from NAD(P)H:plastoquinone, via FMN and iron-sulfur (Fe-S) centers, to quinones in the photosynthetic chain and possibly in a chloroplast respiratory chain. The immediate electron acceptor for the enzyme in this species is believed to be plastoquinone. Couples the redox reaction to proton translocation, and thus conserves the redox energy in a proton gradient. In Olimarabidopsis pumila (Dwarf rocket), this protein is NAD(P)H-quinone oxidoreductase subunit 4L, chloroplastic.